The chain runs to 348 residues: MDLQTKLEQLFQQNNDTIKKVKSLDELNQIRVQLLGKKGPITGVLRGMKDLSAEERPKVGAFANKIRDDLSAVIEARKAQLEQAVINAKLASETVDVTLPGDPVEAGTPHIITQIMDDLEGFFMGMGYQVLTGPEVEEDHYNFEMMNIPKDHPARDMQETFYITNELLMRSQTSPMQARTMEKHDFTKGPLKMISPGVVYRRDDDDATHSHQFHQMEGLVIDKHITMADLKGTLLAMCQHVFGKDRTIRLRPSYFPFTEPSVEVDVSCFRCGGKGCPVCKYTGWIEVLGAGMVHPNVLRAANIDADVYGGFAFGLGPDRFAMLKYGIDDIRSFYTDDLRFLTQFSQEG.

Residue glutamate 259 participates in Mg(2+) binding.

It belongs to the class-II aminoacyl-tRNA synthetase family. Phe-tRNA synthetase alpha subunit type 1 subfamily. In terms of assembly, tetramer of two alpha and two beta subunits. Requires Mg(2+) as cofactor.

The protein localises to the cytoplasm. It carries out the reaction tRNA(Phe) + L-phenylalanine + ATP = L-phenylalanyl-tRNA(Phe) + AMP + diphosphate + H(+). The sequence is that of Phenylalanine--tRNA ligase alpha subunit from Lacticaseibacillus paracasei (strain ATCC 334 / BCRC 17002 / CCUG 31169 / CIP 107868 / KCTC 3260 / NRRL B-441) (Lactobacillus paracasei).